We begin with the raw amino-acid sequence, 474 residues long: Gamma-aminobutyric acid receptor subunit gamma-2 (474 aa).

An N-terminal signal peptide occupies residues 1–38 (MSSPNTWSIGSSVYSPVFSQKMTLWILLLLSLYPGFTS). Over 39 to 274 (QKSDDDYEDY…FDLSRRMGYF (236 aa)) the chain is Extracellular. N-linked (GlcNAc...) asparagine glycosylation is found at Asn51 and Asn128. Cysteines 189 and 203 form a disulfide. Asn246 carries an N-linked (GlcNAc...) asparagine glycan. The helical transmembrane segment at 275–295 (TIQTYIPCTLIVVLSWVSFWI) threads the bilayer. The Cytoplasmic portion of the chain corresponds to 296 to 301 (NKDAVP). A helical membrane pass occupies residues 302–321 (ARTSLGITTVLTMTTLSTIA). Residues 322 to 333 (RKSLPKVSYVTA) lie on the Extracellular side of the membrane. Residues 334 to 358 (MDLFVSVCFIFVFSALVEYGTLHYF) form a helical membrane-spanning segment. Topologically, residues 359–450 (VSNRKPSKDK…IHIRIAKMDS (92 aa)) are cytoplasmic. At Ser381 the chain carries Phosphoserine; by PKC. The chain crosses the membrane as a helical span at residues 451–472 (YARIFFPTAFCLFNLVYWVSYL). The Extracellular portion of the chain corresponds to 473–474 (YL).

It belongs to the ligand-gated ion channel (TC 1.A.9) family. Gamma-aminobutyric acid receptor (TC 1.A.9.5) subfamily. GABRG2 sub-subfamily. As to quaternary structure, heteropentamer, formed by a combination of alpha (GABRA1-6), beta (GABRB1-3), gamma (GABRG1-3), delta (GABRD), epsilon (GABRE), rho (GABRR1-3), pi (GABRP) and theta (GABRQ) chains, each subunit exhibiting distinct physiological and pharmacological properties. Interacts with GABARAP. Interacts with KIF21B. Identified in a complex of 720 kDa composed of LHFPL4, NLGN2, GABRA1, GABRB2, GABRG2 and GABRB3. Interacts with LHFPL4. Interacts with SHISA7; interaction leads to the regulation of GABA(A) receptor trafficking, channel deactivation kinetics and pharmacology. Glycosylated. In terms of processing, palmitoylated by ZDHHC3/GODZ; required for the accumulation of GABA(A) receptors at the postsynaptic membrane of inhibitory GABAergic synapses. Expressed in brain neurons (at protein level).

The protein resides in the postsynaptic cell membrane. It is found in the cell membrane. The protein localises to the cell projection. It localises to the dendrite. Its subcellular location is the cytoplasmic vesicle membrane. It carries out the reaction chloride(in) = chloride(out). With respect to regulation, allosterically activated by benzodiazepines. Activated by pentobarbital. Inhibited by the antagonist bicuculline. Inhibited by zinc ions. Potentiated by histamine. Its function is as follows. Gamma subunit of the heteropentameric ligand-gated chloride channel gated by gamma-aminobutyric acid (GABA), a major inhibitory neurotransmitter in the brain. GABA-gated chloride channels, also named GABA(A) receptors (GABAAR), consist of five subunits arranged around a central pore and contain GABA active binding site(s) located at the alpha and beta subunit interface(s). When activated by GABA, GABAARs selectively allow the flow of chloride anions across the cell membrane down their electrochemical gradient. Gamma-2/GABRG2-containing GABAARs are found at both synaptic and extrasynaptic sites. Chloride influx into the postsynaptic neuron following GABAAR opening decreases the neuron ability to generate a new action potential, thereby reducing nerve transmission. GABAARs containing alpha-1 and beta-2 or -3 subunits exhibit synaptogenic activity; the gamma-2 subunit being necessary but not sufficient to induce rapid synaptic contacts formation. Extrasynaptic gamma-2-containing receptors contribute to the tonic GABAergic inhibition. GABAARs function also as histamine receptor where histamine binds at the interface of two neighboring beta subunits and potentiates GABA response in a gamma-2 subunit-controlled manner. This is Gamma-aminobutyric acid receptor subunit gamma-2 from Mus musculus (Mouse).